A 306-amino-acid chain; its full sequence is Phenylcoumaran benzylic ether reductase IRL1 (306 aa).

NADP(+)-binding positions include 10 to 16 (GATGYIG), arginine 35, and lysine 44. Lysine 132 serves as the catalytic Proton acceptor. Arginine 136 contributes to the NADP(+) binding site.

This sequence belongs to the NmrA-type oxidoreductase family. Isoflavone reductase subfamily. As to expression, highly expressed in sclerotesta. Expressed in roots, and two-to-four year stems.

It catalyses the reaction (-)-dehydrodiconiferyl alcohol + NADPH + H(+) = (S)-isodihydrodehydrodiconiferyl alcohol + NADP(+). The enzyme catalyses (+)-dehydrodiconiferyl alcohol + NADPH + H(+) = (R)-isodihydrodehydrodiconiferyl alcohol + NADP(+). It carries out the reaction (2R,3S)-dihydrodehydrodiconiferyl alcohol + NADPH + H(+) = (S)-tetrahydrodehydrodiconiferyl alcohol + NADP(+). The catalysed reaction is (2S,3R)-dihydrodehydrodiconiferyl alcohol + NADPH + H(+) = (R)-tetrahydrodehydrodiconiferyl alcohol + NADP(+). Its function is as follows. Oxidoreductase involved in lignan biosynthesis. Catalyzes the NADPH-dependent reduction of phenylcoumaran benzylic ethers. Converts dehydrodiconiferyl alcohol (DDC) to isodihydrodehydrodiconiferyl alcohol (IDDDC), and dihydrodehydrodiconiferyl alcohol (DDDC) to tetrahydrodehydrodiconiferyl alcohol (TDDC). May regulate changes in lignin content and accumulation of flavonoids. The polypeptide is Phenylcoumaran benzylic ether reductase IRL1 (Ginkgo biloba (Ginkgo)).